We begin with the raw amino-acid sequence, 393 residues long: uncharacterized protein (393 aa).

Disordered regions lie at residues 77-118 (DSNN…SIRP) and 259-296 (INNN…DESN). A compositionally biased stretch (low complexity) spans 79–92 (NNNNNNNNNNNNNN). The segment covering 103–114 (IRQSLSSPQQLV) has biased composition (polar residues). Over residues 259–289 (INNNNNNNNNNSNNNNNNNNSNNNDNNNNIN) the composition is skewed to low complexity.

This is an uncharacterized protein from Dictyostelium discoideum (Social amoeba).